The following is a 965-amino-acid chain: MEVSGGDTCRPRHPQGLREGPEPKVAAAAAAFRGSANRCWNLSVDTSNRLSDVFNSMMLTGSAPFYDCYKSQNEDNVDLRQTCTPLSSSTEYASSIDSSLFYAPWSTYGDDIKQPPSSQISVKNRIQTERNDYGSETDLYGLVSNILEEQDKSQPYFAEGTCSSNLKSVWPMNTSRFVDHHDLLTEPKRPVDTSISQQAFYSGESVSAVEKQYLHNSSLTPQQKIDELYHGYTGLDLEEQWLYLSRSDHSNCYNSQANDTVKATFQEYPFVKNCFTPQTGLSDIMKESGIDTYAYGREKICTKGLETPLQHKRAEIFLSQFNRYNENADYCRYPEYAHPNKAKLNKCSNFSVQDGKKLANGTPETPTVEADAYTKLFQVKPANQKKMEETIPDQQNFAFPKTTPHLTEKQFAKEAAFTADFGLKSEYGLKPHTACPTNNDFANVSEKQQFAKPDPLNSEYFKSVNLFSNSATSSGGISLNRPTWMNVQTKNNLPIPYRNQGNLMKLNSHLSAASKGSNHSSDFPQLSSTNLTSNSNLFQKYCQENPSAFSSFDFSYNGAERIQSVNHMEGLTKTGEDNLFESVTEKKIKQPNGFCDSYSASQYGIIENVNKHNFQAKPQSGHYDPEDIPKHFDGLPQNTYQDLLESQGHFNSHRQGSGDNNINSRVNRTQASCFSNNYMMGDLRHNQGFQQLGSNGFPLRSTHPFGHSVVPLLDSYDLFSYDDLSHLYPYFNDMMYGDNSFSGFVPTFGFQRPIKTRSGPASELHIRLEECYEQWRALEKERKKTELALAKNYPGKKVSSTNNTPIPRLTSNPSRVDRLIVDELREQARVVTLLGKMERLRSSPLHANISTALDRHLESIHIVQSRRKDEIVNASNRQRQGVPRCQDDRDVFALATAIKEMCVATRKARTTLWCALQMTLPKTASTAGQADMEKAFQDLVNCEEKVHESINSSNPMNQRGETSKH.

2 disordered regions span residues 1–22 (MEVSGGDTCRPRHPQGLREGPE) and 946–965 (VHESINSSNPMNQRGETSKH). Residues 949-965 (SINSSNPMNQRGETSKH) show a composition bias toward polar residues.

In terms of assembly, interacts with YTHDC2; binds transcripts that regulate the mitotic cell cycle inhibiting progression into metaphase, thereby allowing meiotic prophase to proceed normally. Interacts with RBM46. In terms of tissue distribution, expressed specifically in fetal ovary and postnatal and adult testes (at protein level). In adult testis expressed in spermatocytes, beginning in preleptotene and extending through most stages of meiotic prophase I, including leptotene, zygotene, and pachytene.

The protein resides in the cytoplasm. It localises to the nucleus. Functionally, is required for meiosis completion in both male and female germ cells. Confers stability to numerous meiotic mRNAs in gonads allowing proper initiation and progression into meiosis prophase I. The function may involve YTHDC2 and is independent of induction by retinoic acid (RA). Maintains an extended meiotic prophase I by properly promoting the transition from a mitotic to a meiotic cell cycle program by binding transcripts through its interaction with YTHDC2 that regulate the mitotic cell cycle. The chain is Meiosis-specific coiled-coil domain-containing protein MEIOC from Mus musculus (Mouse).